The following is a 365-amino-acid chain: tRNA-specific 2-thiouridylase MnmA (365 aa).

ATP contacts are provided by residues Ala12–Ser19 and Met38. Cys108 functions as the Nucleophile in the catalytic mechanism. Residues Cys108 and Cys206 are joined by a disulfide bond. Gly132 is a binding site for ATP. Residues Lys156 to Gln158 are interaction with tRNA. The active-site Cysteine persulfide intermediate is Cys206. The segment at Arg312–Tyr313 is interaction with tRNA.

It belongs to the MnmA/TRMU family.

It localises to the cytoplasm. It carries out the reaction S-sulfanyl-L-cysteinyl-[protein] + uridine(34) in tRNA + AH2 + ATP = 2-thiouridine(34) in tRNA + L-cysteinyl-[protein] + A + AMP + diphosphate + H(+). Functionally, catalyzes the 2-thiolation of uridine at the wobble position (U34) of tRNA, leading to the formation of s(2)U34. This is tRNA-specific 2-thiouridylase MnmA from Carboxydothermus hydrogenoformans (strain ATCC BAA-161 / DSM 6008 / Z-2901).